The following is a 129-amino-acid chain: Transcription antitermination protein NusB (129 aa).

It belongs to the NusB family.

Involved in transcription antitermination. Required for transcription of ribosomal RNA (rRNA) genes. Binds specifically to the boxA antiterminator sequence of the ribosomal RNA (rrn) operons. This chain is Transcription antitermination protein NusB, found in Bacillus licheniformis (strain ATCC 14580 / DSM 13 / JCM 2505 / CCUG 7422 / NBRC 12200 / NCIMB 9375 / NCTC 10341 / NRRL NRS-1264 / Gibson 46).